The primary structure comprises 343 residues: L-threonine 3-dehydrogenase (343 aa).

Cys-40 contributes to the Zn(2+) binding site. Active-site charge relay system residues include Thr-42 and His-45. His-65, Glu-66, Cys-95, Cys-98, Cys-101, and Cys-109 together coordinate Zn(2+). NAD(+) is bound by residues Ile-177, Asp-197, Arg-202, 264-266 (LGI), and 288-289 (IY).

The protein belongs to the zinc-containing alcohol dehydrogenase family. As to quaternary structure, homotetramer. It depends on Zn(2+) as a cofactor.

The protein localises to the cytoplasm. The catalysed reaction is L-threonine + NAD(+) = (2S)-2-amino-3-oxobutanoate + NADH + H(+). It functions in the pathway amino-acid degradation; L-threonine degradation via oxydo-reductase pathway; glycine from L-threonine: step 1/2. Its function is as follows. Catalyzes the NAD(+)-dependent oxidation of L-threonine to 2-amino-3-ketobutyrate. In Aliivibrio salmonicida (strain LFI1238) (Vibrio salmonicida (strain LFI1238)), this protein is L-threonine 3-dehydrogenase.